We begin with the raw amino-acid sequence, 201 residues long: Holliday junction branch migration complex subunit RuvA (201 aa).

A domain I region spans residues M1 to Q63. Residues S64 to K142 form a domain II region. Positions A143–S153 are flexible linker. Residues S153–K201 are domain III.

Belongs to the RuvA family. Homotetramer. Forms an RuvA(8)-RuvB(12)-Holliday junction (HJ) complex. HJ DNA is sandwiched between 2 RuvA tetramers; dsDNA enters through RuvA and exits via RuvB. An RuvB hexamer assembles on each DNA strand where it exits the tetramer. Each RuvB hexamer is contacted by two RuvA subunits (via domain III) on 2 adjacent RuvB subunits; this complex drives branch migration. In the full resolvosome a probable DNA-RuvA(4)-RuvB(12)-RuvC(2) complex forms which resolves the HJ.

It is found in the cytoplasm. Functionally, the RuvA-RuvB-RuvC complex processes Holliday junction (HJ) DNA during genetic recombination and DNA repair, while the RuvA-RuvB complex plays an important role in the rescue of blocked DNA replication forks via replication fork reversal (RFR). RuvA specifically binds to HJ cruciform DNA, conferring on it an open structure. The RuvB hexamer acts as an ATP-dependent pump, pulling dsDNA into and through the RuvAB complex. HJ branch migration allows RuvC to scan DNA until it finds its consensus sequence, where it cleaves and resolves the cruciform DNA. The polypeptide is Holliday junction branch migration complex subunit RuvA (Listeria innocua serovar 6a (strain ATCC BAA-680 / CLIP 11262)).